Consider the following 131-residue polypeptide: Phosphoribosyl-AMP cyclohydrolase (131 aa).

Residue aspartate 76 participates in Mg(2+) binding. Cysteine 77 serves as a coordination point for Zn(2+). Mg(2+)-binding residues include aspartate 78 and aspartate 80. The Zn(2+) site is built by cysteine 94 and cysteine 101.

It belongs to the PRA-CH family. In terms of assembly, homodimer. The cofactor is Mg(2+). Requires Zn(2+) as cofactor.

Its subcellular location is the cytoplasm. It catalyses the reaction 1-(5-phospho-beta-D-ribosyl)-5'-AMP + H2O = 1-(5-phospho-beta-D-ribosyl)-5-[(5-phospho-beta-D-ribosylamino)methylideneamino]imidazole-4-carboxamide. It functions in the pathway amino-acid biosynthesis; L-histidine biosynthesis; L-histidine from 5-phospho-alpha-D-ribose 1-diphosphate: step 3/9. Its function is as follows. Catalyzes the hydrolysis of the adenine ring of phosphoribosyl-AMP. The chain is Phosphoribosyl-AMP cyclohydrolase from Stutzerimonas stutzeri (strain A1501) (Pseudomonas stutzeri).